Reading from the N-terminus, the 476-residue chain is Bifunctional protein HldE (476 aa).

The interval 1-319 is ribokinase; that stretch reads MKVSLPAFEK…EALALHHGES (319 aa). An ATP-binding site is contributed by 195–198; sequence NMSE. Asp264 is a catalytic residue. A cytidylyltransferase region spans residues 345-476; the sequence is MTNGCFDILH…AIIQNIMANQ (132 aa).

It in the N-terminal section; belongs to the carbohydrate kinase PfkB family. This sequence in the C-terminal section; belongs to the cytidylyltransferase family. In terms of assembly, homodimer.

It carries out the reaction D-glycero-beta-D-manno-heptose 7-phosphate + ATP = D-glycero-beta-D-manno-heptose 1,7-bisphosphate + ADP + H(+). The enzyme catalyses D-glycero-beta-D-manno-heptose 1-phosphate + ATP + H(+) = ADP-D-glycero-beta-D-manno-heptose + diphosphate. It functions in the pathway nucleotide-sugar biosynthesis; ADP-L-glycero-beta-D-manno-heptose biosynthesis; ADP-L-glycero-beta-D-manno-heptose from D-glycero-beta-D-manno-heptose 7-phosphate: step 1/4. Its pathway is nucleotide-sugar biosynthesis; ADP-L-glycero-beta-D-manno-heptose biosynthesis; ADP-L-glycero-beta-D-manno-heptose from D-glycero-beta-D-manno-heptose 7-phosphate: step 3/4. Functionally, catalyzes the phosphorylation of D-glycero-D-manno-heptose 7-phosphate at the C-1 position to selectively form D-glycero-beta-D-manno-heptose-1,7-bisphosphate. In terms of biological role, catalyzes the ADP transfer from ATP to D-glycero-beta-D-manno-heptose 1-phosphate, yielding ADP-D-glycero-beta-D-manno-heptose. In Shewanella baltica (strain OS195), this protein is Bifunctional protein HldE.